Reading from the N-terminus, the 316-residue chain is uncharacterized protein (316 aa).

Position 126 (Thr-126) interacts with substrate. Tyr-149 (proton acceptor) is an active-site residue.

Belongs to the NAD(P)-dependent epimerase/dehydratase family.

This is an uncharacterized protein from Bacillus subtilis (strain 168).